A 649-amino-acid polypeptide reads, in one-letter code: Threonine--tRNA ligase (649 aa).

One can recognise a TGS domain in the interval 1–63 (MSSIKITFPD…KEDGSIEIIT (63 aa)). Positions 245–543 (DHRVIGNELD…LTEMYKGAFP (299 aa)) are catalytic. Residues Cys-339, His-390, and His-520 each coordinate Zn(2+).

This sequence belongs to the class-II aminoacyl-tRNA synthetase family. As to quaternary structure, homodimer. Zn(2+) serves as cofactor.

It is found in the cytoplasm. The catalysed reaction is tRNA(Thr) + L-threonine + ATP = L-threonyl-tRNA(Thr) + AMP + diphosphate + H(+). Catalyzes the attachment of threonine to tRNA(Thr) in a two-step reaction: L-threonine is first activated by ATP to form Thr-AMP and then transferred to the acceptor end of tRNA(Thr). Also edits incorrectly charged L-seryl-tRNA(Thr). The protein is Threonine--tRNA ligase of Ligilactobacillus salivarius (strain UCC118) (Lactobacillus salivarius).